We begin with the raw amino-acid sequence, 156 residues long: Ribosomal RNA large subunit methyltransferase H (156 aa).

S-adenosyl-L-methionine contacts are provided by residues Leu73, Gly104, and 123–128 (LSSLTL).

This sequence belongs to the RNA methyltransferase RlmH family. Homodimer.

It is found in the cytoplasm. It carries out the reaction pseudouridine(1915) in 23S rRNA + S-adenosyl-L-methionine = N(3)-methylpseudouridine(1915) in 23S rRNA + S-adenosyl-L-homocysteine + H(+). Functionally, specifically methylates the pseudouridine at position 1915 (m3Psi1915) in 23S rRNA. This is Ribosomal RNA large subunit methyltransferase H from Bordetella avium (strain 197N).